Reading from the N-terminus, the 65-residue chain is DNA-directed RNA polymerase subunit Rpo10 (65 aa).

Residues Cys-7, Cys-10, Cys-44, and Cys-45 each contribute to the Zn(2+) site.

The protein belongs to the archaeal Rpo10/eukaryotic RPB10 RNA polymerase subunit family. As to quaternary structure, part of the RNA polymerase complex. Zn(2+) is required as a cofactor.

It localises to the cytoplasm. The enzyme catalyses RNA(n) + a ribonucleoside 5'-triphosphate = RNA(n+1) + diphosphate. Its function is as follows. DNA-dependent RNA polymerase (RNAP) catalyzes the transcription of DNA into RNA using the four ribonucleoside triphosphates as substrates. This Nanoarchaeum equitans (strain Kin4-M) protein is DNA-directed RNA polymerase subunit Rpo10.